The following is a 362-amino-acid chain: Histidinol-phosphate aminotransferase (362 aa).

Lysine 218 is subject to N6-(pyridoxal phosphate)lysine.

Belongs to the class-II pyridoxal-phosphate-dependent aminotransferase family. Histidinol-phosphate aminotransferase subfamily. As to quaternary structure, homodimer. It depends on pyridoxal 5'-phosphate as a cofactor.

It carries out the reaction L-histidinol phosphate + 2-oxoglutarate = 3-(imidazol-4-yl)-2-oxopropyl phosphate + L-glutamate. Its pathway is amino-acid biosynthesis; L-histidine biosynthesis; L-histidine from 5-phospho-alpha-D-ribose 1-diphosphate: step 7/9. The sequence is that of Histidinol-phosphate aminotransferase from Xanthomonas campestris pv. campestris (strain ATCC 33913 / DSM 3586 / NCPPB 528 / LMG 568 / P 25).